Here is an 886-residue protein sequence, read N- to C-terminus: Neurotrophin 1 (886 aa).

Positions 1–29 (MKAGRAFGCLFWALLYCVLYLDLVSGNSA) are cleaved as a signal peptide. The propeptide occupies 30–498 (DDELMDFDFA…FDDFSLSKKR (469 aa)). Asn-267 and Asn-317 each carry an N-linked (GlcNAc...) asparagine glycan. Residues 321-340 (FQQPSSQEEEKMASSNGGQS) form a disordered region. Asn-353 is a glycosylation site (N-linked (GlcNAc...) asparagine). Residues 369-436 (RNSAEETEEP…HKPVVTPPNK (68 aa)) form a disordered region. The Spaetzle domain maps to 508–597 (MCQSVVRYAR…KVPTCCSCQV (90 aa)). Cystine bridges form between Cys-509/Cys-564, Cys-546/Cys-593, and Cys-553/Cys-595. An N-linked (GlcNAc...) asparagine glycan is attached at Asn-623. 2 disordered regions span residues 675 to 754 (PGIS…QYHR) and 789 to 886 (VSAP…QSIQ). A compositionally biased stretch (low complexity) spans 698–710 (YKSSSSSSKKYYS). Positions 797–807 (PAPPLPMPPMP) are enriched in pro residues. 2 stretches are compositionally biased toward basic residues: residues 815–827 (HQAH…HHLH) and 874–886 (SRRH…QSIQ).

As to quaternary structure, homodimer; disulfide-linked. Detected in the fan-shaped body which is a component of the locomotion center in the central nervous system (CNS) (at protein level). Expressed in the optic lobes and brain.

Neurotrophin which may function as a ligand for the Toll-related receptors Toll-7 and Tollo. Binds to Toll-7 and probably acts as its ligand in promoting motor axon targeting and neuronal survival in the central nervous system (CNS). Involved in synaptic targeting of ISNb/d motorneurons and also some SNa motorneurons. In larvae, involved in the negative regulation of the tracheal immune response to bacterial infection perhaps by acting as a ligand for the Toll-related receptor Tollo. May be involved in the normal development of specific neurons at the neuromuscular junction. This Drosophila melanogaster (Fruit fly) protein is Neurotrophin 1.